The sequence spans 634 residues: Pheromone-processing carboxypeptidase KEX1 (634 aa).

The N-terminal stretch at 1–24 is a signal peptide; sequence MKLAMRRASTFALLALSWSAAVSA. Over 25–512 the chain is Lumenal; it reads ASSAGDYFVR…DEAKWYAYRK (488 aa). Active-site residues include Ser177 and Asp378. A glycan (N-linked (GlcNAc...) asparagine) is linked at Asn429. Residue His440 is part of the active site. Residues 468 to 498 are disordered; sequence NPTDSRLDGEKLPETTVGGAAGNSTSKQEEE. Asn490 carries an N-linked (GlcNAc...) asparagine glycan. Residues 513–533 traverse the membrane as a helical segment; the sequence is SGEVVLVIVAVAAVAWGWYVW. Over 534 to 634 the chain is Cytoplasmic; it reads RDRRRRRGYQ…EGGPSGGRGR (101 aa). Residues 542–634 are disordered; that stretch reads YQGIFGGSPS…EGGPSGGRGR (93 aa).

The protein belongs to the peptidase S10 family.

It is found in the golgi apparatus. The protein resides in the trans-Golgi network membrane. It carries out the reaction Preferential release of a C-terminal arginine or lysine residue.. Its function is as follows. Protease with a carboxypeptidase B-like function involved in the C-terminal processing of the lysine and arginine residues from protein precursors. Promotes cell fusion and is involved in the programmed cell death. The polypeptide is Pheromone-processing carboxypeptidase KEX1 (KEX1) (Pyricularia oryzae (strain 70-15 / ATCC MYA-4617 / FGSC 8958) (Rice blast fungus)).